Consider the following 78-residue polypeptide: Short neurotoxin OH-5 (78 aa).

The N-terminal stretch at 1 to 21 (MKNLLLTFLVVTIVCLDLGYT) is a signal peptide. Disulfide bonds link C24–C40, C33–C58, C62–C70, and C71–C76.

Belongs to the three-finger toxin family. Short-chain subfamily. Expressed by the venom gland.

It is found in the secreted. Its function is as follows. This three-finger toxin binds and inhibits the nicotinic acetylcholine receptor (nAChR). The protein is Short neurotoxin OH-5 of Ophiophagus hannah (King cobra).